We begin with the raw amino-acid sequence, 281 residues long: Ribonuclease HII (281 aa).

The interval 1–46 (MIRDTKQPIKVPAKPASRSGGKAKTVKPKTIKPKTSAKAAAAKPAS) is disordered. Positions 33-46 (PKTSAKAAAAKPAS) are enriched in low complexity. In terms of domain architecture, RNase H type-2 spans 73-261 (WPIAGCDEAG…VAAAWQKIEG (189 aa)). Asp-79, Glu-80, and Asp-170 together coordinate a divalent metal cation.

The protein belongs to the RNase HII family. Mn(2+) is required as a cofactor. Requires Mg(2+) as cofactor.

The protein resides in the cytoplasm. The enzyme catalyses Endonucleolytic cleavage to 5'-phosphomonoester.. Endonuclease that specifically degrades the RNA of RNA-DNA hybrids. This Rhodopseudomonas palustris (strain TIE-1) protein is Ribonuclease HII.